The primary structure comprises 349 residues: DNA replication and repair protein RecF (349 aa).

Position 29 to 36 (29 to 36) interacts with ATP; that stretch reads GLNGVGKT.

This sequence belongs to the RecF family.

It is found in the cytoplasm. Its function is as follows. The RecF protein is involved in DNA metabolism; it is required for DNA replication and normal SOS inducibility. RecF binds preferentially to single-stranded, linear DNA. It also seems to bind ATP. This chain is DNA replication and repair protein RecF, found in Acholeplasma laidlawii (strain PG-8A).